The following is a 485-amino-acid chain: Ribulose bisphosphate carboxylase large chain (485 aa).

The propeptide occupies 1-2 (MS). N-acetylproline is present on Pro-3. Lys-14 is subject to N6,N6,N6-trimethyllysine. Residues Asn-123 and Thr-173 each contribute to the substrate site. Lys-175 serves as the catalytic Proton acceptor. Position 177 (Lys-177) interacts with substrate. The Mg(2+) site is built by Lys-201, Asp-203, and Glu-204. Lys-201 is modified (N6-carboxylysine). The active-site Proton acceptor is the His-294. Residues Arg-295, His-327, and Ser-379 each coordinate substrate.

The protein belongs to the RuBisCO large chain family. Type I subfamily. In terms of assembly, heterohexadecamer of 8 large chains and 8 small chains; disulfide-linked. The disulfide link is formed within the large subunit homodimers. It depends on Mg(2+) as a cofactor. The disulfide bond which can form in the large chain dimeric partners within the hexadecamer appears to be associated with oxidative stress and protein turnover.

The protein localises to the plastid. Its subcellular location is the chloroplast. The enzyme catalyses 2 (2R)-3-phosphoglycerate + 2 H(+) = D-ribulose 1,5-bisphosphate + CO2 + H2O. The catalysed reaction is D-ribulose 1,5-bisphosphate + O2 = 2-phosphoglycolate + (2R)-3-phosphoglycerate + 2 H(+). Its function is as follows. RuBisCO catalyzes two reactions: the carboxylation of D-ribulose 1,5-bisphosphate, the primary event in carbon dioxide fixation, as well as the oxidative fragmentation of the pentose substrate in the photorespiration process. Both reactions occur simultaneously and in competition at the same active site. This Bartlettina sordida (Purple torch) protein is Ribulose bisphosphate carboxylase large chain.